The chain runs to 79 residues: uncharacterized protein (79 aa).

The tract at residues 1-27 is disordered; that stretch reads MRQRGQEHLPTSVKSEPRACNNPTVAE.

This is an uncharacterized protein from Homo sapiens (Human).